A 659-amino-acid polypeptide reads, in one-letter code: Nitrate import ATP-binding protein NrtC (659 aa).

One can recognise an ABC transporter domain in the interval 5–239; the sequence is LAVDHVHQVF…RPRQRLEMME (235 aa). ATP is bound at residue 42 to 49; that stretch reads GHSGCGKS. A linker region spans residues 255–278; it reads QQQRRAKRRAKAAAPAPAVAASQQ. A nrtA-like region spans residues 279 to 659; sequence KTVRLGFLPG…VAPIPLATSA (381 aa).

This sequence belongs to the ABC transporter superfamily. Nitrate/nitrite/cyanate uptake transporter (NitT) (TC 3.A.1.16) family. As to quaternary structure, the complex is composed of two ATP-binding proteins (NrtC and NrtD), two transmembrane proteins (NrtB) and a solute-binding protein (NrtA).

It is found in the cell inner membrane. It carries out the reaction nitrate(out) + ATP + H2O = nitrate(in) + ADP + phosphate + H(+). Its activity is regulated as follows. Transport is inhibited by ammonium. The C-terminal domain of NrtC is involved in the ammonium-promoted inhibition of the nitrate/nitrite transporter. Its function is as follows. Part of the ABC transporter complex NrtABCD involved in nitrate uptake. The complex is probably also involved in nitrite transport. Probably responsible for energy coupling to the transport system. This is Nitrate import ATP-binding protein NrtC from Synechococcus elongatus (strain ATCC 33912 / PCC 7942 / FACHB-805) (Anacystis nidulans R2).